The sequence spans 700 residues: uncharacterized protein (700 aa).

9 helical membrane-spanning segments follow: residues 24-44 (VLCLPVAVGLMLGELRFGLLF), 67-87 (LIIGASLFATCSLLTQLLLAK), 89-109 (VPLPFLLTGLTLVLGVTAELG), 115-135 (LLPASLLAAIFTLSLAGYMPV), 139-159 (LLIYALGTLWYGLFNWFWFWI), 383-403 (LMGTALHLPKSYWILMTVLLV), 420-440 (VGTVVGLIIAGVALHFKIPEG), 461-481 (YGWATVGFTITAVYTLQLLWL), and 491-511 (LIDTIIGCLIAFGGTVWLWPQ).

The protein belongs to the YccS/YhfK family.

Its subcellular location is the cell membrane. This is an uncharacterized protein from Escherichia coli (strain K12).